A 232-amino-acid chain; its full sequence is Thiamine import ATP-binding protein ThiQ (232 aa).

In terms of domain architecture, ABC transporter spans 2-230 (LKLTDITWLY…KASASALLGI (229 aa)). 32 to 39 (GPSGAGKS) contacts ATP.

It belongs to the ABC transporter superfamily. Thiamine importer (TC 3.A.1.19.1) family. In terms of assembly, the complex is composed of two ATP-binding proteins (ThiQ), two transmembrane proteins (ThiP) and a solute-binding protein (ThiB).

Its subcellular location is the cell inner membrane. The catalysed reaction is thiamine(out) + ATP + H2O = thiamine(in) + ADP + phosphate + H(+). Its function is as follows. Part of the ABC transporter complex ThiBPQ involved in thiamine import. Responsible for energy coupling to the transport system. The chain is Thiamine import ATP-binding protein ThiQ from Escherichia coli (strain UTI89 / UPEC).